We begin with the raw amino-acid sequence, 296 residues long: MLTFQEIILKLHHYWASKGCAIIQPLDMEVGAGTFHPATTLRAIGPEPWTAAYVQPSRRPTDGRYGENPNRTQHYYQYQVVMKPSPDDIQELYLGSLRELGIDPLENDIRFVEDNWESPTLGAWGLGWEVWSNGMEITQFTYFQQVGGLECKPVMGEITYGLERLAMYIQNVDSMYDILWANTQNGPLYYRDVFLQNEVEMSTYNFEEANVEELFKQFDLLEKEGYRLIEKNLPIPAYEFVLKASHTFNLLDARHAISVTERQGYILRVRKLALEVAKEYYSAREKLGFPAFKKDN.

This sequence belongs to the class-II aminoacyl-tRNA synthetase family. Tetramer of two alpha and two beta subunits.

It is found in the cytoplasm. The catalysed reaction is tRNA(Gly) + glycine + ATP = glycyl-tRNA(Gly) + AMP + diphosphate. The sequence is that of Glycine--tRNA ligase alpha subunit from Francisella tularensis subsp. novicida (strain U112).